Consider the following 298-residue polypeptide: Putative glycylpeptide N-tetradecanoyltransferase (298 aa).

This sequence belongs to the NMT family.

The enzyme catalyses N-terminal glycyl-[protein] + tetradecanoyl-CoA = N-tetradecanoylglycyl-[protein] + CoA + H(+). Its function is as follows. Adds a myristoyl group to the N-terminal glycine residue of certain proteins. This is Putative glycylpeptide N-tetradecanoyltransferase from Melanoplus sanguinipes (Migratory grasshopper).